The sequence spans 136 residues: UPF0102 protein BBta_0181 (136 aa).

This sequence belongs to the UPF0102 family.

This Bradyrhizobium sp. (strain BTAi1 / ATCC BAA-1182) protein is UPF0102 protein BBta_0181.